The sequence spans 94 residues: MNACILLTTLVTMITIEKVQGQSYHFSNGWNPGKRSMQEPVCHFRQDVQTLVLKLIEDEVYRMLSDPSCIGGVPTLRNFLKKDLAYTVPLDDKK.

Residues 1 to 21 (MNACILLTTLVTMITIEKVQG) form the signal peptide.

It is found in the secreted. In terms of biological role, neuropeptide involved in reproduction. May be an important hormone in the regulation of gonadal maturation. The protein is Prepro-gonadotropin-releasing hormone-like protein of Ruditapes philippinarum (Japanese carpet shell).